A 228-amino-acid polypeptide reads, in one-letter code: Biosynthetic peptidoglycan transglycosylase (228 aa).

The chain crosses the membrane as a helical span at residues 8-28 (GVAALLALFLLYQLWIFGHIV).

This sequence belongs to the glycosyltransferase 51 family.

Its subcellular location is the cell inner membrane. It catalyses the reaction [GlcNAc-(1-&gt;4)-Mur2Ac(oyl-L-Ala-gamma-D-Glu-L-Lys-D-Ala-D-Ala)](n)-di-trans,octa-cis-undecaprenyl diphosphate + beta-D-GlcNAc-(1-&gt;4)-Mur2Ac(oyl-L-Ala-gamma-D-Glu-L-Lys-D-Ala-D-Ala)-di-trans,octa-cis-undecaprenyl diphosphate = [GlcNAc-(1-&gt;4)-Mur2Ac(oyl-L-Ala-gamma-D-Glu-L-Lys-D-Ala-D-Ala)](n+1)-di-trans,octa-cis-undecaprenyl diphosphate + di-trans,octa-cis-undecaprenyl diphosphate + H(+). It participates in cell wall biogenesis; peptidoglycan biosynthesis. In terms of biological role, peptidoglycan polymerase that catalyzes glycan chain elongation from lipid-linked precursors. In Laribacter hongkongensis (strain HLHK9), this protein is Biosynthetic peptidoglycan transglycosylase.